We begin with the raw amino-acid sequence, 223 residues long: NLP effector protein 2 (223 aa).

Positions 90-100 match the Conserved undecapeptide motif motif; sequence AIMYSWYFPKD. The Conserved p motif signature appears at 107 to 113; sequence GHRHDWE.

Belongs to the Necrosis inducing protein (NPP1) family.

The protein localises to the secreted. The protein resides in the host cytoplasm. In terms of biological role, probable secreted effector that may act as a pathogen-associated molecular pattern (PAMP) recognized by the plant immune system. Seems not to induce necrosis, neither in several susceptible or resistant Vitis species nor in the dicot model plant Nicotiana benthamiana. This is NLP effector protein 2 from Plasmopara viticola (Downy mildew of grapevine).